The primary structure comprises 327 residues: Malate dehydrogenase (327 aa).

11–17 contacts NAD(+); it reads GAAGNIS. Positions 92 and 98 each coordinate substrate. NAD(+) is bound by residues asparagine 105, glutamine 112, and 129-131; that span reads VGN. The substrate site is built by asparagine 131 and arginine 162. Histidine 187 acts as the Proton acceptor in catalysis. Residues 304-327 form a disordered region; sequence SQEKMKATEQELSEERDAVEHLLP.

The protein belongs to the LDH/MDH superfamily. MDH type 2 family.

It carries out the reaction (S)-malate + NAD(+) = oxaloacetate + NADH + H(+). In terms of biological role, catalyzes the reversible oxidation of malate to oxaloacetate. This Psychrobacter sp. (strain PRwf-1) protein is Malate dehydrogenase.